Consider the following 1212-residue polypeptide: DNA-directed RNA polymerase subunit beta (1212 aa).

Over residues 1176–1195 (QQEKKKLAEEAAKKDDKSAE) the composition is skewed to basic and acidic residues. The interval 1176–1212 (QQEKKKLAEEAAKKDDKSAEPVDQSDSSTSSDDKVSK) is disordered.

The protein belongs to the RNA polymerase beta chain family. As to quaternary structure, the RNAP catalytic core consists of 2 alpha, 1 beta, 1 beta' and 1 omega subunit. When a sigma factor is associated with the core the holoenzyme is formed, which can initiate transcription.

The catalysed reaction is RNA(n) + a ribonucleoside 5'-triphosphate = RNA(n+1) + diphosphate. Its function is as follows. DNA-dependent RNA polymerase catalyzes the transcription of DNA into RNA using the four ribonucleoside triphosphates as substrates. This is DNA-directed RNA polymerase subunit beta from Lactobacillus gasseri (strain ATCC 33323 / DSM 20243 / BCRC 14619 / CIP 102991 / JCM 1131 / KCTC 3163 / NCIMB 11718 / NCTC 13722 / AM63).